We begin with the raw amino-acid sequence, 290 residues long: Protein translocase subunit SecF (290 aa).

The next 6 membrane-spanning stretches (helical) occupy residues 15–35 (VFMI…FTKG), 131–151 (KAIL…TVRF), 156–176 (AISA…IFAI), 184–204 (SFIA…IIVF), 234–256 (TLYT…GVVL), and 260–282 (ILAI…SAIL).

This sequence belongs to the SecD/SecF family. SecF subfamily. Forms a complex with SecD. Part of the essential Sec protein translocation apparatus which comprises SecA, SecYEG and auxiliary proteins SecDF. Other proteins may also be involved.

Its subcellular location is the cell inner membrane. In terms of biological role, part of the Sec protein translocase complex. Interacts with the SecYEG preprotein conducting channel. SecDF uses the proton motive force (PMF) to complete protein translocation after the ATP-dependent function of SecA. The protein is Protein translocase subunit SecF of Dictyoglomus turgidum (strain DSM 6724 / Z-1310).